We begin with the raw amino-acid sequence, 2002 residues long: [F-actin]-monooxygenase MICAL3 (2002 aa).

Positions 2–494 are monooxygenase domain; that stretch reads EERKHETMNP…RHLYDTGETK (493 aa). Residues Cys97, 116 to 118, 123 to 125, Phe183, Tyr298, and Asp398 each bind FAD; these read EKR and RNN. Positions 518-624 constitute a Calponin-homology (CH) domain; it reads VARSSKLLGW…YLTQFYEMFK (107 aa). Ser649 carries the post-translational modification Phosphoserine. The tract at residues 658-706 is disordered; the sequence is GQTISRKRSPKDKKEKDLDGAGKRRKTSQSEEEEAPRGHRGERPTLVST. A Nuclear localization signal motif is present at residues 663–684; the sequence is RKRSPKDKKEKDLDGAGKRRKT. A compositionally biased stretch (basic and acidic residues) spans 669 to 679; it reads DKKEKDLDGAG. Phosphoserine is present on residues Ser685 and Ser687. In terms of domain architecture, LIM zinc-binding spans 762-824; sequence DTCYFCQKRV…KPHYCYRLSG (63 aa). Zn(2+)-binding residues include Cys764, Cys767, His785, Cys788, Cys791, Cys794, Cys814, and His817. The disordered stretch occupies residues 835-883; sequence PLSGKEAKGPLQDGATTDANGRANAVASSTERTPGSGVNGLEEPSIAKR. At Thr887 the chain carries Phosphothreonine. 3 disordered regions span residues 907–1313, 1335–1776, and 1791–1821; these read QEVP…SPLA, RRSL…GKHR, and LSFS…TYTE. The span at 938-950 shows a compositional bias: acidic residues; that stretch reads SEMEEEGEEEEEE. Ser977 bears the Phosphoserine mark. The segment covering 991 to 1017 has biased composition (acidic residues); that stretch reads NEEEEEEEEEYEEEEEEDYDEEEEESS. A compositionally biased stretch (basic and acidic residues) spans 1041–1054; sequence HWTHIREREEEERM. The span at 1055 to 1066 shows a compositional bias: low complexity; sequence APASESSASGAP. Over residues 1068-1102 the composition is skewed to acidic residues; the sequence is DENDLEEDVDSEPAEIEGEAAEDGDPGDTGAELDD. A phosphoserine mark is found at Ser1134, Ser1143, Ser1160, and Ser1192. Over residues 1150 to 1163 the composition is skewed to polar residues; that stretch reads GPSQATSPIRSPQE. Over residues 1191–1218 the composition is skewed to basic and acidic residues; that stretch reads KSPEERLFPEPLLPKEKPKADAPSDLKA. A compositionally biased stretch (pro residues) spans 1239–1258; sequence PGSPQPQPPVAASTPPPSPL. 2 stretches are compositionally biased toward polar residues: residues 1268-1280 and 1288-1302; these read TEAT…QSPI and KTST…QSQS. Ser1274 carries the post-translational modification Phosphoserine. A Phosphothreonine modification is found at Thr1276. Phosphoserine is present on Ser1278. A phosphoserine mark is found at Ser1310 and Ser1337. The residue at position 1341 (Thr1341) is a Phosphothreonine. Phosphoserine occurs at positions 1371 and 1384. A compositionally biased stretch (basic and acidic residues) spans 1407-1422; that stretch reads PSDRELRSAQEERREL. The span at 1423–1435 shows a compositional bias: low complexity; sequence SSSSGLGLHGSSS. The residue at position 1433 (Ser1433) is a Phosphoserine. The span at 1436–1451 shows a compositional bias: polar residues; the sequence is NMKTLGSQSFNTSDSA. At Thr1454 the chain carries Phosphothreonine. Residues 1456–1467 are compositionally biased toward pro residues; sequence PSSPPPPPPPGE. Residues 1516 to 1530 show a composition bias toward acidic residues; sequence SVEEIPFADDVEDTY. The span at 1588 to 1604 shows a compositional bias: basic and acidic residues; the sequence is EAKELAEERMRAREKSV. Position 1649 is a phosphoserine (Ser1649). Position 1651 is a phosphothreonine (Thr1651). Residues 1657 to 1668 are compositionally biased toward basic and acidic residues; the sequence is GSEEPTLKHEAT. Low complexity predominate over residues 1674-1694; sequence SPPSDSGGPDGSFTSSEGSSG. Over residues 1695–1713 the composition is skewed to basic residues; sequence KSKKRSSLFSPRRNKKEKK. Phosphoserine occurs at positions 1701 and 1704. Residues 1760–1769 show a composition bias toward polar residues; sequence CPSTPSSGAT. The span at 1804–1820 shows a compositional bias: basic and acidic residues; the sequence is VLEKSSQKSRREPRTYT. A coiled-coil region spans residues 1821-1992; it reads EEELNAKLTR…EEDKDLEAAM (172 aa). In terms of domain architecture, bMERB spans 1841–1990; it reads KQEELKRLHR…EREEDKDLEA (150 aa). A Phosphoserine modification is found at Ser1912.

This sequence belongs to the Mical family. In terms of assembly, interacts with RAB1B, RAB8A, RAB10, RAB13 and RAB15 (in their GTP-bound forms); binding to RAB1B is of low affinity compared to other Rab proteins; at least in case of RAB8A can bind 2 molecules of RAB8A simultaneously through a high and a low affinity binding site, respectively. Interacts with ERC1 and RAB8A; may bridge ERC1 with RAB8A. Interacts with KIF23 and ERC1; enhances the interaction between KIF23 and ERC1. Interacts with NINL isoform 2. The cofactor is FAD. Ubiquitous.

It is found in the cytoplasm. The protein resides in the cell cortex. It localises to the cytoskeleton. The protein localises to the nucleus. Its subcellular location is the midbody. It is found in the spindle. The protein resides in the cilium basal body. The catalysed reaction is L-methionyl-[F-actin] + NADPH + O2 + H(+) = L-methionyl-(R)-S-oxide-[F-actin] + NADP(+) + H2O. Functionally, monooxygenase that promotes depolymerization of F-actin by mediating oxidation of specific methionine residues on actin to form methionine-sulfoxide, resulting in actin filament disassembly and preventing repolymerization. In the absence of actin, it also functions as a NADPH oxidase producing H(2)O(2). Seems to act as Rab effector protein and plays a role in vesicle trafficking. Involved in exocytic vesicles tethering and fusion: the monooxygenase activity is required for this process and implicates RAB8A associated with exocytotic vesicles. Required for cytokinesis. Contributes to stabilization and/or maturation of the intercellular bridge independently of its monooxygenase activity. Promotes recruitment of Rab8 and ERC1 to the intercellular bridge, and together these proteins are proposed to function in timely abscission. This is [F-actin]-monooxygenase MICAL3 (MICAL3) from Homo sapiens (Human).